The chain runs to 453 residues: Homogentisate 1,2-dioxygenase (453 aa).

Catalysis depends on His-306, which acts as the Proton acceptor. Positions 349 and 355 each coordinate Fe cation. Homogentisate-binding residues include Tyr-364 and His-385. A Fe cation-binding site is contributed by His-385.

Belongs to the homogentisate dioxygenase family. Hexamer; dimer of trimers. Requires Fe cation as cofactor.

It catalyses the reaction homogentisate + O2 = 4-maleylacetoacetate + H(+). Its pathway is amino-acid degradation; L-phenylalanine degradation; acetoacetate and fumarate from L-phenylalanine: step 4/6. Its function is as follows. Involved in the catabolism of homogentisate (2,5-dihydroxyphenylacetate or 2,5-OH-PhAc), a central intermediate in the degradation of phenylalanine and tyrosine. Catalyzes the oxidative ring cleavage of the aromatic ring of homogentisate to yield maleylacetoacetate. The polypeptide is Homogentisate 1,2-dioxygenase (Rhizobium etli (strain ATCC 51251 / DSM 11541 / JCM 21823 / NBRC 15573 / CFN 42)).